The chain runs to 416 residues: MRNQGFTKEDRMNQLPEDLILRILSFLPTELVIATSVLSKQWRSLWKLVPNLEFDSDDYESEHYTFSEIVCKSFLSLKAPVLKSLHLSFRKSVNPVDIGLWIGIAFARHLRELVLYVAPKQTFTFPSSLCICNTLETLKLILGIHVDIPCPVLLKSLRTLHLDSVSYKDEESIRNLLSSCPILENLVVYEYWYNVVNFDIEVPSLKRLEICDVLHKKEFRRYTINVPCLKYLRIEGLNKDFELCLNAPELVEAYFTKGSLIIADKFLGSLKSAKRLSLDILALKMHTRREEWWNLLTVMLDSSPKLQVLKLIDHTQDVSKDNVVSEKWNEPKYVPECLLSHLETFVWIRYDWEREEEKEVATYILRNARWLKKGTISTNPIESKDLEKLEERRKMLNELDSVVRASNSCNLVFEFE.

Residues Glu9–Glu62 form the F-box domain. Positions Lys327 to Thr378 constitute an FBD domain.

This chain is FBD-associated F-box protein At3g52670, found in Arabidopsis thaliana (Mouse-ear cress).